The primary structure comprises 320 residues: Nodulation efficiency protein NfeD (320 aa).

Belongs to the ornithine cyclodeaminase/mu-crystallin family.

Functionally, seems to be involved in the nodulation efficiency of R.meliloti GR4 on alfalfa roots. The sequence is that of Nodulation efficiency protein NfeD from Rhizobium meliloti (Ensifer meliloti).